Here is a 133-residue protein sequence, read N- to C-terminus: NADPH-dependent 7-cyano-7-deazaguanine reductase (133 aa).

Catalysis depends on Cys-48, which acts as the Thioimide intermediate. The active-site Proton donor is the Asp-55. Residues 70 to 72 and 89 to 90 contribute to the substrate site; these read VEL and QE.

It belongs to the GTP cyclohydrolase I family. QueF type 1 subfamily.

Its subcellular location is the cytoplasm. The catalysed reaction is 7-aminomethyl-7-carbaguanine + 2 NADP(+) = 7-cyano-7-deazaguanine + 2 NADPH + 3 H(+). The protein operates within tRNA modification; tRNA-queuosine biosynthesis. Functionally, catalyzes the NADPH-dependent reduction of 7-cyano-7-deazaguanine (preQ0) to 7-aminomethyl-7-deazaguanine (preQ1). The polypeptide is NADPH-dependent 7-cyano-7-deazaguanine reductase (Thermoanaerobacter pseudethanolicus (strain ATCC 33223 / 39E) (Clostridium thermohydrosulfuricum)).